We begin with the raw amino-acid sequence, 199 residues long: NAD(P)H dehydrogenase (quinone) (199 aa).

A Flavodoxin-like domain is found at Val-4 to Ile-190. FMN-binding positions include Ser-10–Ile-15 and Thr-78–Phe-80. An NAD(+)-binding site is contributed by Tyr-12. Trp-98 serves as a coordination point for substrate. FMN contacts are provided by residues Ser-113–Gly-119 and His-134.

Belongs to the WrbA family. FMN serves as cofactor.

The catalysed reaction is a quinone + NADH + H(+) = a quinol + NAD(+). It carries out the reaction a quinone + NADPH + H(+) = a quinol + NADP(+). This Bradyrhizobium diazoefficiens (strain JCM 10833 / BCRC 13528 / IAM 13628 / NBRC 14792 / USDA 110) protein is NAD(P)H dehydrogenase (quinone).